The sequence spans 41 residues: MAVPKKRHSKRICKIKFYSWKSKFLKKVQFIINQKSIIKNK.

Belongs to the bacterial ribosomal protein bL32 family.

The protein localises to the plastid. This is Large ribosomal subunit protein bL32c (rpl32) from Helicosporidium sp. subsp. Simulium jonesii (Green alga).